The following is a 185-amino-acid chain: Ribosome-recycling factor (185 aa).

It belongs to the RRF family.

The protein localises to the cytoplasm. In terms of biological role, responsible for the release of ribosomes from messenger RNA at the termination of protein biosynthesis. May increase the efficiency of translation by recycling ribosomes from one round of translation to another. The polypeptide is Ribosome-recycling factor (Pseudomonas putida (strain ATCC 700007 / DSM 6899 / JCM 31910 / BCRC 17059 / LMG 24140 / F1)).